Consider the following 387-residue polypeptide: S-adenosylmethionine synthase (387 aa).

H16 serves as a coordination point for ATP. D18 is a binding site for Mg(2+). E44 is a binding site for K(+). L-methionine is bound by residues E57 and Q100. The tract at residues 100-110 (QSPDIAQGVDR) is flexible loop. Residues 167-169 (DAK), 232-233 (RF), D241, 247-248 (RK), A264, and K268 each bind ATP. Residue D241 participates in L-methionine binding. K272 is a binding site for L-methionine.

Belongs to the AdoMet synthase family. Homotetramer; dimer of dimers. Mg(2+) is required as a cofactor. Requires K(+) as cofactor.

It localises to the cytoplasm. The enzyme catalyses L-methionine + ATP + H2O = S-adenosyl-L-methionine + phosphate + diphosphate. It participates in amino-acid biosynthesis; S-adenosyl-L-methionine biosynthesis; S-adenosyl-L-methionine from L-methionine: step 1/1. Functionally, catalyzes the formation of S-adenosylmethionine (AdoMet) from methionine and ATP. The overall synthetic reaction is composed of two sequential steps, AdoMet formation and the subsequent tripolyphosphate hydrolysis which occurs prior to release of AdoMet from the enzyme. This Cupriavidus necator (strain ATCC 17699 / DSM 428 / KCTC 22496 / NCIMB 10442 / H16 / Stanier 337) (Ralstonia eutropha) protein is S-adenosylmethionine synthase.